The primary structure comprises 244 residues: tRNA (guanine-N(1)-)-methyltransferase (244 aa).

S-adenosyl-L-methionine contacts are provided by residues G112 and 131–136; that span reads IGDFIV.

It belongs to the RNA methyltransferase TrmD family. Homodimer.

Its subcellular location is the cytoplasm. It carries out the reaction guanosine(37) in tRNA + S-adenosyl-L-methionine = N(1)-methylguanosine(37) in tRNA + S-adenosyl-L-homocysteine + H(+). Its function is as follows. Specifically methylates guanosine-37 in various tRNAs. This is tRNA (guanine-N(1)-)-methyltransferase from Clostridium kluyveri (strain NBRC 12016).